The chain runs to 284 residues: Cell division protein FtsQ (284 aa).

Residues 1–31 (MAQLPASMRRKRAAITSIHDKPPTRKQKLAN) lie on the Cytoplasmic side of the membrane. Residues 32–52 (AGGWVLLVIAFVVLAVGIYGL) form a helical membrane-spanning segment. Residues 53–284 (YKVITDATVA…SIAGGTKAKP (232 aa)) lie on the Periplasmic side of the membrane. The region spanning 59–128 (ATVAKLEVVG…NGIRVRVMPR (70 aa)) is the POTRA domain.

It belongs to the FtsQ/DivIB family. FtsQ subfamily. As to quaternary structure, part of a complex composed of FtsB, FtsL and FtsQ.

Its subcellular location is the cell inner membrane. Functionally, essential cell division protein. May link together the upstream cell division proteins, which are predominantly cytoplasmic, with the downstream cell division proteins, which are predominantly periplasmic. May control correct divisome assembly. In Acinetobacter oleivorans (strain JCM 16667 / KCTC 23045 / DR1), this protein is Cell division protein FtsQ.